The chain runs to 367 residues: Peptide chain release factor 1 (367 aa).

Gln-243 carries the post-translational modification N5-methylglutamine.

The protein belongs to the prokaryotic/mitochondrial release factor family. In terms of processing, methylated by PrmC. Methylation increases the termination efficiency of RF1.

The protein localises to the cytoplasm. Peptide chain release factor 1 directs the termination of translation in response to the peptide chain termination codons UAG and UAA. The polypeptide is Peptide chain release factor 1 (Acidovorax ebreus (strain TPSY) (Diaphorobacter sp. (strain TPSY))).